A 212-amino-acid chain; its full sequence is Ribosome maturation factor RimP (212 aa).

This sequence belongs to the RimP family.

It is found in the cytoplasm. Functionally, required for maturation of 30S ribosomal subunits. This is Ribosome maturation factor RimP from Variovorax paradoxus (strain S110).